The chain runs to 363 residues: MKIGVFIPIGNNGWLISETAPQYKPTFELNKTIVQKAEHYHFDFALSMIKLRGFGGKTEFWEHNMESFTLMAGLAAVTSRIQLYATAATLVMPPAIVARMAATIDSISNGRFGVNVVTGWQKPEYEQMGMWPGDDYFTRRYDYLTEYVSVLRDLWGTGHCTLDGEFFKMDDCRVSPRPQSEMKVICAGQSDAGMAFSAKHADFNFCFGKGVNTPTAFAPTAARMKTAADAENRDVSSYVLFMVIADETDEAARAKWELYKAGADAEALSWLTDQSSKDTRSGSDTNVRQMADPTSAVNINMGTLVGSWASVARMLDEIDTVPGAGGVLLTFDDFVEGIENFGRYIQPLMKTRQHIGIEQKEVA.

FMN-binding positions include 49-50 (IK), N115, E124, 140-141 (RY), and S190.

This sequence belongs to the NtaA/SnaA/DszA monooxygenase family. RutA subfamily.

It carries out the reaction uracil + FMNH2 + NADH + O2 = (Z)-3-ureidoacrylate + FMN + NAD(+) + H2O + H(+). The enzyme catalyses thymine + FMNH2 + NADH + O2 = (Z)-2-methylureidoacrylate + FMN + NAD(+) + H2O + H(+). Catalyzes the pyrimidine ring opening between N-3 and C-4 by an unusual flavin hydroperoxide-catalyzed mechanism, adding oxygen atoms in the process to yield ureidoacrylate peracid, that immediately reacts with FMN forming ureidoacrylate and FMN-N(5)-oxide. The FMN-N(5)-oxide reacts spontaneously with NADH to produce FMN. Requires the flavin reductase RutF to regenerate FMN in vivo. In Pantoea ananatis (strain LMG 20103), this protein is Pyrimidine monooxygenase RutA.